The sequence spans 526 residues: Phosphoenolpyruvate carboxylase (526 aa).

The protein belongs to the PEPCase type 2 family. Homotetramer. Requires Mg(2+) as cofactor.

The enzyme catalyses oxaloacetate + phosphate = phosphoenolpyruvate + hydrogencarbonate. Catalyzes the irreversible beta-carboxylation of phosphoenolpyruvate (PEP) to form oxaloacetate (OAA), a four-carbon dicarboxylic acid source for the tricarboxylic acid cycle. This chain is Phosphoenolpyruvate carboxylase, found in Methanosarcina mazei (strain ATCC BAA-159 / DSM 3647 / Goe1 / Go1 / JCM 11833 / OCM 88) (Methanosarcina frisia).